Reading from the N-terminus, the 397-residue chain is uncharacterized protein (397 aa).

Ser-115 and Ser-141 each carry phosphoserine. A disordered region spans residues 135–156; it reads NSLNHDSPPHTPARRSDNSTSK. A Glycyl lysine isopeptide (Lys-Gly) (interchain with G-Cter in SUMO2) cross-link involves residue Lys-239. Phosphoserine occurs at positions 269 and 296. Residues 289 to 316 are disordered; that stretch reads GRGPTKASPQPALTVKAKATSSATTLAS. Residues 300–316 show a composition bias toward low complexity; the sequence is ALTVKAKATSSATTLAS. Ser-342 is modified (phosphoserine). The interval 354–397 is disordered; sequence SEAQDSQVTSTKSPTVRCIVPDPPAPLASQRPPRRRWRRTCKDC. Positions 356–367 are enriched in polar residues; that stretch reads AQDSQVTSTKSP. Positions 385–397 are enriched in basic residues; it reads PPRRRWRRTCKDC.

This is an uncharacterized protein from Rattus norvegicus (Rat).